Here is a 1223-residue protein sequence, read N- to C-terminus: WD repeat-containing protein 11 (1223 aa).

2 WD repeats span residues 59–108 and 111–154; these read KHKA…AQCE and EHVK…KLWK. A phosphoserine mark is found at Ser205 and Ser209. The stretch at 354–393 is one WD 3 repeat; sequence KTVRPFSMVCCPVNENAAALIVSDGRVMIWELKSAVCSRN. Phosphoserine is present on residues Ser401 and Ser405. WD repeat units follow at residues 470-509, 565-604, 707-744, 746-786, 792-830, and 892-939; these read RMCPPLTTKNIKTYQPLLAVGTSNGSVLVYHLTSGLLHKE, NDESPIEMIKVSHLKQYLAVVFKDKPLELWDIRTCTLLRE, GSMGSITCIAWKGDTLVLGDMDGNLNFWDLKARVSRGI, THRS…MVSS, NVTFRILDVDWCTSDKVILASDDGCIRVLEMSMKSTCFR, and ALSN…HSLS.

As to quaternary structure, component of the complex WDR11 composed of C17orf75, FAM91A1 and WDR11; FAM91A1 and WDR11 are required for proper location of the complex. Interacts with GLI3; the interaction associateS EMX1 with GLI3. Interacts with TBC1D23; this interaction may be indirect and recruits TBC1D23 to AP-1-derived vesicles. Interacts (via the N-terminal and the central portion of the protein) with EMX1. Broadly expressed in various organs including brain, eye,ear, lung, heart, kideny and gonads. Cerebral cortex. The entire developing central nervous system, except for the spinal cord, reveals expression. Expressed in the neuroepithelium, including the diencephalic region that gives rise to hypothalamic neurons. In the adult brain, intense expression is restricted to the olfactory bulb, the olfaction-related piriform cortex, the granule cell layer of the cerebellum, and neurons of the hippocampal formation. The brain demonstrated expression scattered throughout the hypothalamus, sometimes in clusters of neurons.

The protein resides in the cytoplasm. It is found in the cytoskeleton. Its subcellular location is the cilium basal body. It localises to the nucleus. The protein localises to the cilium axoneme. The protein resides in the cytoplasmic vesicle. It is found in the golgi apparatus. Its subcellular location is the trans-Golgi network. Its function is as follows. Involved in the Hedgehog (Hh) signaling pathway, is essential for normal ciliogenesis. Regulates the proteolytic processing of GLI3 and cooperates with the transcription factor EMX1 in the induction of downstream Hh pathway gene expression and gonadotropin-releasing hormone production. WDR11 complex facilitates the tethering of Adaptor protein-1 complex (AP-1)-derived vesicles. WDR11 complex acts together with TBC1D23 to facilitate the golgin-mediated capture of vesicles generated using AP-1. The sequence is that of WD repeat-containing protein 11 (Wdr11) from Mus musculus (Mouse).